Here is a 644-residue protein sequence, read N- to C-terminus: Pesticidal crystal protein Cry3Aa (644 aa).

Residues 1-13 are compositionally biased toward basic and acidic residues; that stretch reads MNPNNRSEHDTIK. The segment at 1-20 is disordered; it reads MNPNNRSEHDTIKTTENNEV. Positions 1–57 are cleaved as a propeptide — removed in mature form; that stretch reads MNPNNRSEHDTIKTTENNEVPTNHVQYPLAETPNPTLEDLNYKEFLRMTADNNTEAL.

This sequence belongs to the delta endotoxin family.

Functionally, promotes colloidosmotic lysis by binding to the midgut epithelial cells of Coleoptera. The protein is Pesticidal crystal protein Cry3Aa (cry3Aa) of Bacillus thuringiensis subsp. san diego.